Consider the following 250-residue polypeptide: U6 snRNA phosphodiesterase 1 (250 aa).

The tract at residues 1 to 31 is disordered; that stretch reads MALVSYSSSEEDEGETSEPPGRRLPPLPPPT. Residues 22 to 31 show a composition bias toward pro residues; the sequence is RRLPPLPPPT. The active-site Proton acceptor is histidine 105. 105–107 lines the AMP pocket; the sequence is HIS. UMP-binding positions include glutamine 149, tyrosine 187, and 191–195; that span reads SFHVS. AMP contacts are provided by residues tyrosine 187 and 189 to 195; that span reads EPSFHVS. Histidine 193 functions as the Proton donor in the catalytic mechanism.

Belongs to the 2H phosphoesterase superfamily. USB1 family.

Its subcellular location is the nucleus. It catalyses the reaction a 3'-end uridylyl-uridine-RNA = a 3'-end 2',3'-cyclophospho-uridine-RNA + uridine. The catalysed reaction is a 3'-end uridylyl-adenosine-RNA = a 3'-end 2',3'-cyclophospho-uridine-RNA + adenosine. Its function is as follows. 3'-5' RNA exonuclease that trims the 3' end of oligo(U) and oligo(A) tracts of the pre-U6 small nuclear RNA (snRNA) molecule, leading to the formation of a mature U6 snRNA 3' end-terminated with a 2',3'-cyclic phosphate. Participates in the U6 snRNA 3' end processing that prevents U6 snRNA degradation. In addition also removes uridines from the 3' end of U6atac snRNA and possibly the vault RNA VTRNA1-1. The chain is U6 snRNA phosphodiesterase 1 from Xenopus laevis (African clawed frog).